The chain runs to 203 residues: Holliday junction branch migration complex subunit RuvA (203 aa).

The segment at 1–63 (MIDYLRGTLT…EDVIRLYGFR (63 aa)) is domain I. Positions 64–142 (TKEKRSLFEK…ELHPGLFSQK (79 aa)) are domain II. The interval 143-152 (EEQPKPHEKN) is flexible linker. Residues 153-203 (DGNQALDEAMEALKALGYVEKELKKVKPKLEQETLTTDAYIKKALQLMLNR) form a domain III region.

This sequence belongs to the RuvA family. In terms of assembly, homotetramer. Forms an RuvA(8)-RuvB(12)-Holliday junction (HJ) complex. HJ DNA is sandwiched between 2 RuvA tetramers; dsDNA enters through RuvA and exits via RuvB. An RuvB hexamer assembles on each DNA strand where it exits the tetramer. Each RuvB hexamer is contacted by two RuvA subunits (via domain III) on 2 adjacent RuvB subunits; this complex drives branch migration. In the full resolvosome a probable DNA-RuvA(4)-RuvB(12)-RuvC(2) complex forms which resolves the HJ.

The protein localises to the cytoplasm. The RuvA-RuvB-RuvC complex processes Holliday junction (HJ) DNA during genetic recombination and DNA repair, while the RuvA-RuvB complex plays an important role in the rescue of blocked DNA replication forks via replication fork reversal (RFR). RuvA specifically binds to HJ cruciform DNA, conferring on it an open structure. The RuvB hexamer acts as an ATP-dependent pump, pulling dsDNA into and through the RuvAB complex. HJ branch migration allows RuvC to scan DNA until it finds its consensus sequence, where it cleaves and resolves the cruciform DNA. In Halalkalibacterium halodurans (strain ATCC BAA-125 / DSM 18197 / FERM 7344 / JCM 9153 / C-125) (Bacillus halodurans), this protein is Holliday junction branch migration complex subunit RuvA.